The sequence spans 570 residues: Proline--tRNA ligase (570 aa).

It belongs to the class-II aminoacyl-tRNA synthetase family. ProS type 1 subfamily. Homodimer.

Its subcellular location is the cytoplasm. The enzyme catalyses tRNA(Pro) + L-proline + ATP = L-prolyl-tRNA(Pro) + AMP + diphosphate. Catalyzes the attachment of proline to tRNA(Pro) in a two-step reaction: proline is first activated by ATP to form Pro-AMP and then transferred to the acceptor end of tRNA(Pro). As ProRS can inadvertently accommodate and process non-cognate amino acids such as alanine and cysteine, to avoid such errors it has two additional distinct editing activities against alanine. One activity is designated as 'pretransfer' editing and involves the tRNA(Pro)-independent hydrolysis of activated Ala-AMP. The other activity is designated 'posttransfer' editing and involves deacylation of mischarged Ala-tRNA(Pro). The misacylated Cys-tRNA(Pro) is not edited by ProRS. The protein is Proline--tRNA ligase of Clostridium perfringens (strain ATCC 13124 / DSM 756 / JCM 1290 / NCIMB 6125 / NCTC 8237 / Type A).